We begin with the raw amino-acid sequence, 380 residues long: Putative 12-oxophytodienoate reductase 4 (380 aa).

Residues 36 to 38 (PLT), A69, and Q111 contribute to the FMN site. 183–186 (HGAH) contributes to the substrate binding site. Catalysis depends on Y188, which acts as the Proton donor. R235 contacts FMN. Residue R276 coordinates substrate. Residues G306 and 327-328 (GR) each bind FMN.

Belongs to the NADH:flavin oxidoreductase/NADH oxidase family. Requires FMN as cofactor.

In terms of biological role, putative oxophytodienoate reductase that may be involved in the biosynthesis or metabolism of oxylipin signaling molecules. This is Putative 12-oxophytodienoate reductase 4 (OPR4) from Oryza sativa subsp. japonica (Rice).